The following is a 309-amino-acid chain: Glutaminase (309 aa).

Residues Ser64, Asn114, Glu160, Asn167, Tyr191, Tyr243, and Val261 each contribute to the substrate site.

It belongs to the glutaminase family. As to quaternary structure, homotetramer.

The catalysed reaction is L-glutamine + H2O = L-glutamate + NH4(+). This Methylorubrum extorquens (strain PA1) (Methylobacterium extorquens) protein is Glutaminase.